Here is a 587-residue protein sequence, read N- to C-terminus: DELLA protein GAIP-B (587 aa).

The tract at residues 1-23 (MKREHHHLHPRPDPPSMAAAPNG) is disordered. Positions 46–50 (DELLA) match the DELLA motif motif. Residues 209-577 (VDSQENGIQL…RPLIVTSAWK (369 aa)) form the GRAS domain. Residues 216–270 (IQLVHALMACAEAVQQNNLNLAEALEKRIGYLAVSQAGAMRKVATFFAEALARRI) are leucine repeat I (LRI). The tract at residues 288–353 (QLHFYESSPY…SGPPAFRLTG (66 aa)) is VHIID. Residues 319-323 (VHVID) carry the VHIID motif. The interval 367-399 (DVGWKLAKLVETINVEFEYRGFVANSLADLDAS) is leucine repeat II (LRII). The interval 411-498 (VVVNSVFELH…EMYLGKQICN (88 aa)) is PFYRE. The LXXLL motif signature appears at 419 to 423 (LHKLL). The segment at 501–577 (ACEGSDRVEW…RPLIVTSAWK (77 aa)) is SAW.

The protein belongs to the GRAS family. DELLA subfamily. Post-translationally, phosphorylated. In terms of processing, ubiquitinated. Upon GA application it is ubiquitinated, leading to its subsequent degradation.

The protein localises to the nucleus. Its function is as follows. Probable transcriptional regulator that acts as a repressor of the gibberellin (GA) signaling pathway. Probably acts by participating in large multiprotein complexes that represses transcription of GA-inducible genes. Upon GA application, it is degraded by the proteasome, allowing the GA signaling pathway. The polypeptide is DELLA protein GAIP-B (GAIPB) (Cucurbita maxima (Pumpkin)).